We begin with the raw amino-acid sequence, 390 residues long: Ammonium/H(+) antiporter subunit AmhT (390 aa).

A run of 10 helical transmembrane segments spans residues 2-22, 31-51, 52-72, 94-114, 143-163, 178-198, 212-232, 266-286, 288-308, and 351-371; these read VIPELFSAGLILLLLFITGFV, VVIFILLGIAVGGLLSGSHLL, HFAGEVGIVLLFFMLGMEFPL, FGVTMAICMMMGLDVITSLII, FMLGLLIFEDLVAPILVAVLV, LLVVKVVALVAGAVILGVFLF, DLFILFVIGLALMYGGLALYL, LLLPLFFLYFGTTISFSEGIP, IPLLILVLVWSVIAKVIVGVL, and VFILASAMIGILLFQFAPSIA.

This sequence belongs to the monovalent cation:proton antiporter 2 (CPA2) transporter (TC 2.A.37) family. Interacts with AmhM.

It localises to the cell membrane. AmhT alone exhibits antiport activity, but interaction with AmhM confers different properties, such as higher KM for potassium. In terms of biological role, ammonium/proton antiporter that mediates the efflux of ammonium ions. Can also transport potassium or rubidium, but not sodium or lithium. This Alkalihalophilus pseudofirmus (strain ATCC BAA-2126 / JCM 17055 / OF4) (Bacillus pseudofirmus) protein is Ammonium/H(+) antiporter subunit AmhT (amhT).